Reading from the N-terminus, the 484-residue chain is Endoglucanase 9 (484 aa).

The N-terminal stretch at 1–21 (MTSLFFFVLLFSSLLISNGDA) is a signal peptide. The active-site Nucleophile is Asp-77. Residues His-402, Asp-453, and Glu-462 contribute to the active site.

The protein belongs to the glycosyl hydrolase 9 (cellulase E) family. In terms of tissue distribution, specifically expressed in root cap cells.

It localises to the secreted. The protein localises to the cell wall. It carries out the reaction Endohydrolysis of (1-&gt;4)-beta-D-glucosidic linkages in cellulose, lichenin and cereal beta-D-glucans.. The protein is Endoglucanase 9 (CEL3) of Arabidopsis thaliana (Mouse-ear cress).